The sequence spans 371 residues: Leucine-rich repeat-containing protein 2 (371 aa).

9 LRR repeats span residues 122–143 (HLREWYISNTLIQIIPTYIQLF), 145–166 (AMRILDLPKNQISHLPAEIGCL), 168–189 (NLKELNVGFNYLKSIPPELGDC), 191–214 (NLERLDCSGNLELMELPFELSNLK), 215–235 (QVTFVDISANKFSSVPICVLR), 238–260 (NLQWLDISSNNLTDLPQDIDRLE), 261–283 (ELQSFLLYKNKLTYLPYSMLNLK), 284–305 (KLTLLVVSGDHLVELPTALCDS), and 308–329 (PLKFVSLMDNPIDNAQCEDGNE).

This Homo sapiens (Human) protein is Leucine-rich repeat-containing protein 2 (LRRC2).